The sequence spans 121 residues: Small ribosomal subunit protein uS13 (121 aa).

The segment at 91 to 121 is disordered; that stretch reads HRMSLPVRGQRTRTNARTRRGSRKTVAGRKK. Positions 100 to 121 are enriched in basic residues; that stretch reads QRTRTNARTRRGSRKTVAGRKK.

It belongs to the universal ribosomal protein uS13 family. Part of the 30S ribosomal subunit. Forms a loose heterodimer with protein S19. Forms two bridges to the 50S subunit in the 70S ribosome.

Located at the top of the head of the 30S subunit, it contacts several helices of the 16S rRNA. In the 70S ribosome it contacts the 23S rRNA (bridge B1a) and protein L5 of the 50S subunit (bridge B1b), connecting the 2 subunits; these bridges are implicated in subunit movement. Contacts the tRNAs in the A and P-sites. This is Small ribosomal subunit protein uS13 from Prochlorococcus marinus (strain MIT 9515).